A 264-amino-acid polypeptide reads, in one-letter code: Indole-3-glycerol phosphate synthase (264 aa).

Belongs to the TrpC family.

The catalysed reaction is 1-(2-carboxyphenylamino)-1-deoxy-D-ribulose 5-phosphate + H(+) = (1S,2R)-1-C-(indol-3-yl)glycerol 3-phosphate + CO2 + H2O. It participates in amino-acid biosynthesis; L-tryptophan biosynthesis; L-tryptophan from chorismate: step 4/5. The sequence is that of Indole-3-glycerol phosphate synthase from Lactococcus lactis subsp. cremoris (strain MG1363).